Here is a 418-residue protein sequence, read N- to C-terminus: Aspartate aminotransferase, cytoplasmic (418 aa).

Residue S2 is modified to N-acetylserine. The L-aspartate site is built by G38, W135, and N188. Residue K255 is modified to N6-(pyridoxal phosphate)lysine. L-aspartate is bound at residue R387. S389 is subject to Phosphoserine.

It belongs to the class-I pyridoxal-phosphate-dependent aminotransferase family. In terms of assembly, homodimer. Pyridoxal 5'-phosphate serves as cofactor.

The protein localises to the cytoplasm. It is found in the peroxisome. The catalysed reaction is L-aspartate + 2-oxoglutarate = oxaloacetate + L-glutamate. Plays a key role in amino acid metabolism. This Saccharomyces cerevisiae (strain ATCC 204508 / S288c) (Baker's yeast) protein is Aspartate aminotransferase, cytoplasmic (AAT2).